The primary structure comprises 1079 residues: Isoleucine--tRNA ligase (1079 aa).

Positions 53 to 63 (PFANGLPHYGH) match the 'HIGH' region motif. The 'KMSKS' region motif lies at 611–615 (KLSKR). Residue lysine 614 participates in ATP binding.

This sequence belongs to the class-I aminoacyl-tRNA synthetase family. IleS type 2 subfamily. Monomer. Zn(2+) is required as a cofactor.

The protein resides in the cytoplasm. It catalyses the reaction tRNA(Ile) + L-isoleucine + ATP = L-isoleucyl-tRNA(Ile) + AMP + diphosphate. Its function is as follows. Catalyzes the attachment of isoleucine to tRNA(Ile). As IleRS can inadvertently accommodate and process structurally similar amino acids such as valine, to avoid such errors it has two additional distinct tRNA(Ile)-dependent editing activities. One activity is designated as 'pretransfer' editing and involves the hydrolysis of activated Val-AMP. The other activity is designated 'posttransfer' editing and involves deacylation of mischarged Val-tRNA(Ile). The protein is Isoleucine--tRNA ligase of Rickettsia canadensis (strain McKiel).